The primary structure comprises 193 residues: MLRCGLACERCRWILPLLLLSAIAFDIIALAGRGWLQSSNHIQTSSLWWRCFDEGGGSGSYDDGCQSLMEYAWGRAAAATLFCGFIILCICFILSFFALCGPQMLVFLRVIGGLLALAAIFQIISLVIYPVKYTQTFRLHDNPAVNYIYNWAYGFGWAATIILIGCSFFFCCLPNYEDDLLGAAKPRYFYPPA.

4 consecutive transmembrane segments (helical) span residues 12-32, 81-101, 110-130, and 151-171; these read RWIL…ALAG, LFCG…ALCG, VIGG…VIYP, and WAYG…FFFC.

Belongs to the TMEM47 family. As to expression, expressed in the stratified squamous skin epithelium of the skin and the tongue, but not in simple epithelia (at protein level). Expressed in the oral epithelium, tongue epithelium and skin (at protein level). More abundant in areas of lower flow stress in the inner curvature compared to the outer curvature regions of the aorta (at protein level). Expressed in luminal cells and myoepithelium cells of the mammary epithelium (at protein level). Expression increases during the early stages of pregnancy before decreasing before birth, expression continues to be weak during involution which mirrors decreased desmosome abundance and organization at these time points (at protein level). Expressed by epithelial cells at the mucosal surface in the proximal colon (at protein level). Expressed in apoptotic cells.

It is found in the cell junction. The protein resides in the desmosome. Its subcellular location is the cell membrane. It localises to the cytoplasm. Component of intercellular desmosome junctions. Plays a role in stratified epithelial integrity and cell-cell adhesion by promoting desmosome assembly. Thereby plays a role in barrier function of the skin against infection. Plays a role in mammary epithelial tissue homeostasis and remodeling during and after pregnancy, potentially via its involvement in desmosome cell-cell junctions. Required for tooth enamel development via facilitating desmosome-mediated ameloblast adhesion to the stratum intermedium during the transitional stage of amelogenesis. May also play a role in downstream transcriptional regulation of other genes involved in amelogenesis such as AMBN, ENAM, MMP20 and KLK4. Plays a role as an effector in the TP53-dependent apoptotic pathway. Positively regulates apoptosis in T-helper 17 (Th17) cell populations via caspase-dependent signaling. Promotes neutrophil transepithelial migration in response to chemoattractants such as hepoxilin A3 (HXA3), N-Formylmethionyl-leucyl-phenylalanine (fMLP) and CXCL8/IL-8. May act as a positive regulator of endothelial cell apoptosis in response to blood flow-derived shear stress. The polypeptide is p53 apoptosis effector related to PMP-22 (Mus musculus (Mouse)).